The primary structure comprises 414 residues: 5-aminolevulinate synthase (414 aa).

3 residues coordinate substrate: R22, S133, and K152. Pyridoxal 5'-phosphate-binding residues include S185, H213, and T241. K244 is a catalytic residue. Position 244 is an N6-(pyridoxal phosphate)lysine (K244). Positions 273 and 274 each coordinate pyridoxal 5'-phosphate. T359 lines the substrate pocket.

This sequence belongs to the class-II pyridoxal-phosphate-dependent aminotransferase family. In terms of assembly, homodimer. The cofactor is pyridoxal 5'-phosphate.

The enzyme catalyses succinyl-CoA + glycine + H(+) = 5-aminolevulinate + CO2 + CoA. Its pathway is porphyrin-containing compound metabolism; protoporphyrin-IX biosynthesis; 5-aminolevulinate from glycine: step 1/1. The sequence is that of 5-aminolevulinate synthase (hemA) from Rickettsia prowazekii (strain Madrid E).